We begin with the raw amino-acid sequence, 159 residues long: MVQYPMTANGAAKLRSELKQLKTVTRPRIVKAIAEAREHGDLKENAEYHAAREQQGFCEGRIQDIEAKLSNARIIDITNITNNGKVIFGATVTIVNVETDAEVTYKIVGDDEANIKINLISVSSPLARGLIGKTLDDEISIVTPGGTIDYEIISVQYIA.

The protein belongs to the GreA/GreB family.

In terms of biological role, necessary for efficient RNA polymerase transcription elongation past template-encoded arresting sites. The arresting sites in DNA have the property of trapping a certain fraction of elongating RNA polymerases that pass through, resulting in locked ternary complexes. Cleavage of the nascent transcript by cleavage factors such as GreA or GreB allows the resumption of elongation from the new 3'terminus. GreA releases sequences of 2 to 3 nucleotides. This chain is Transcription elongation factor GreA, found in Psychromonas ingrahamii (strain DSM 17664 / CCUG 51855 / 37).